The sequence spans 315 residues: tRNA dimethylallyltransferase (315 aa).

An ATP-binding site is contributed by 13-20 (GPTAVGKT). 15–20 (TAVGKT) is a binding site for substrate. Residues 38-41 (DSMQ) form an interaction with substrate tRNA region.

It belongs to the IPP transferase family. As to quaternary structure, monomer. Mg(2+) is required as a cofactor.

It carries out the reaction adenosine(37) in tRNA + dimethylallyl diphosphate = N(6)-dimethylallyladenosine(37) in tRNA + diphosphate. In terms of biological role, catalyzes the transfer of a dimethylallyl group onto the adenine at position 37 in tRNAs that read codons beginning with uridine, leading to the formation of N6-(dimethylallyl)adenosine (i(6)A). In Staphylococcus saprophyticus subsp. saprophyticus (strain ATCC 15305 / DSM 20229 / NCIMB 8711 / NCTC 7292 / S-41), this protein is tRNA dimethylallyltransferase.